The primary structure comprises 197 residues: ATP-dependent Clp protease proteolytic subunit 2 (197 aa).

Catalysis depends on Ser101, which acts as the Nucleophile. The active site involves His126.

The protein belongs to the peptidase S14 family. In terms of assembly, fourteen ClpP subunits assemble into 2 heptameric rings which stack back to back to give a disk-like structure with a central cavity, resembling the structure of eukaryotic proteasomes.

Its subcellular location is the cytoplasm. The enzyme catalyses Hydrolysis of proteins to small peptides in the presence of ATP and magnesium. alpha-casein is the usual test substrate. In the absence of ATP, only oligopeptides shorter than five residues are hydrolyzed (such as succinyl-Leu-Tyr-|-NHMec, and Leu-Tyr-Leu-|-Tyr-Trp, in which cleavage of the -Tyr-|-Leu- and -Tyr-|-Trp bonds also occurs).. Its function is as follows. Cleaves peptides in various proteins in a process that requires ATP hydrolysis. Has a chymotrypsin-like activity. Plays a major role in the degradation of misfolded proteins. In Trichormus variabilis (strain ATCC 29413 / PCC 7937) (Anabaena variabilis), this protein is ATP-dependent Clp protease proteolytic subunit 2.